The sequence spans 125 residues: Salivary protein 15 Ipac-1 (125 aa).

The first 15 residues, 1–15 (MKVVCIILLFGIAAA), serve as a signal peptide directing secretion. Asn-82 and Asn-94 each carry an N-linked (GlcNAc...) asparagine glycan. Residues 106–125 (GPSGQTCADKSKCVGHIPGC) form a CD4-binding region.

It belongs to the salp15 family. In terms of assembly, interacts with host CD4. Interacts with host DC-SIGN (CD209). Interacts with Borrelia outer surface protein C (OspC). As to expression, expressed in salivary glands.

The protein resides in the secreted. Functionally, salivary tick protein that downregulates host immune system by binding to both dendritic cells, and CD4(+) T cells. Specifically binds to the CD4 coreceptor on T cells. This interaction prevents the activation of the Src kinase, Lck, and its downstream substrate Zap-70, and results in deficient activation of PLCgamma1, the repression of calcium fluxes triggered by T-cell antigen receptor (TCR) ligation, and a subsequent reduction in interleukin-2 production. This salivary protein also binds to DC-SIGN (CD209) on dendritic cells (DC) and activates the Raf-1 kinase/MEK signaling pathway that results in down-regulating expression of pro-inflammatory cytokines. Furthermore, it inhibits T cell proliferation induced by DCs. It also inhibits in vitro keratinocyte inflammation induced by Borrelia burgdorferi or by the major outer surface protein (OspC) of Borrelia. In addition, it downregulates chemokines and monocyte chemoattractant protein 1, as well as several antimicrobial peptides such as defensins, cathelicidin, psoriasin, and RNase 7. Apart from its immunomodulatory activities, it is also associated with protection of Borrelia spirochetes from antibody-mediated killing through its binding to OspC. In vivo, tests on different immune disease animal models show promising therapeutic results, e.g., in inhibiting HIV infection, experimental autoimmune encephalomyelitis, transplantation rejection, and asthma. This Ixodes pacificus (Western black-legged tick) protein is Salivary protein 15 Ipac-1.